Consider the following 326-residue polypeptide: Bifunctional pinoresinol-lariciresinol reductase (326 aa).

NADP(+)-binding positions include 25-31 (GGTGYLG), arginine 50, and lysine 59. Lysine 153 (proton acceptor) is an active-site residue. Position 157 (arginine 157) interacts with NADP(+). Residue histidine 285 coordinates substrate.

Belongs to the NmrA-type oxidoreductase family. Isoflavone reductase subfamily. In terms of assembly, dimer.

It catalyses the reaction (+)-lariciresinol + NADP(+) = (+)-pinoresinol + NADPH + H(+). It carries out the reaction (-)-secoisolariciresinol + NADP(+) = (+)-lariciresinol + NADPH + H(+). Its function is as follows. Reductase involved in lignan biosynthesis. Catalyzes the enantioselective conversion of (+)-pinoresinol into (+)-lariciresinol and of (+)-lariciresinol into (-)-secoisolariciresinol. Abstracts the 4R-hydride from the NADPH cofactor during catalysis. The polypeptide is Bifunctional pinoresinol-lariciresinol reductase (PLR1) (Linum album (Flax)).